We begin with the raw amino-acid sequence, 421 residues long: Glutamate dehydrogenase (421 aa).

Lysine 105 is an active-site residue. NAD(+) is bound at residue glycine 220–tyrosine 226.

It belongs to the Glu/Leu/Phe/Val dehydrogenases family. Homohexamer.

It localises to the cytoplasm. Its subcellular location is the chromosome. It catalyses the reaction L-glutamate + NAD(+) + H2O = 2-oxoglutarate + NH4(+) + NADH + H(+). It carries out the reaction L-glutamate + NADP(+) + H2O = 2-oxoglutarate + NH4(+) + NADPH + H(+). The sequence is that of Glutamate dehydrogenase (gdhA) from Thermococcus kodakarensis (strain ATCC BAA-918 / JCM 12380 / KOD1) (Pyrococcus kodakaraensis (strain KOD1)).